A 571-amino-acid polypeptide reads, in one-letter code: Zinc finger protein 181 (571 aa).

The 73-residue stretch at valine 4–proline 76 folds into the KRAB domain. Glycyl lysine isopeptide (Lys-Gly) (interchain with G-Cter in SUMO2) cross-links involve residues lysine 109 and lysine 126. C2H2-type zinc fingers lie at residues tyrosine 237–histidine 259, tyrosine 265–histidine 287, tyrosine 293–histidine 315, tyrosine 321–histidine 343, tyrosine 349–histidine 371, tyrosine 377–histidine 399, tyrosine 405–histidine 427, phenylalanine 433–histidine 455, tyrosine 461–histidine 483, tyrosine 489–histidine 511, and tyrosine 517–histidine 539.

The protein belongs to the krueppel C2H2-type zinc-finger protein family.

Its subcellular location is the nucleus. Its function is as follows. May be involved in transcriptional regulation. In Homo sapiens (Human), this protein is Zinc finger protein 181 (ZNF181).